We begin with the raw amino-acid sequence, 444 residues long: Acyl-CoA 6-desaturase (444 aa).

Residues 1–131 (MGKGGNQGEG…DMNLFKTNHV (131 aa)) are Cytoplasmic-facing. In terms of domain architecture, Cytochrome b5 heme-binding spans 18-95 (VPTFSWEEIQ…LKPLLIGELA (78 aa)). Residues 132–152 (FFLLLLAHIIALESIAWFTVF) traverse the membrane as a helical segment. The Lumenal segment spans residues 153-157 (YFGNG). Residues 158 to 178 (WIPTLITAFVLATSQAQAGWL) traverse the membrane as a helical segment. Residues 179–264 (QHDYGHLSVY…KYLPYNHQHE (86 aa)) are Cytoplasmic-facing. Positions 180–184 (HDYGH) match the Histidine box-1 motif. The short motif at 217-221 (HFQHH) is the Histidine box-2 element. Residues 265-285 (YFFLIGPPLLIPMYFQYQIIM) traverse the membrane as a helical segment. Residues 286–305 (TMIVHKNWVDLAWAVSYYIR) are Lumenal-facing. The helical transmembrane segment at 306–326 (FFITYIPFYGILGALLFLNFI) threads the bilayer. The Cytoplasmic segment spans residues 327–444 (RFLESHWFVW…KLWLDAYLHK (118 aa)). The Histidine box-3 signature appears at 382–386 (QIEHH).

The protein belongs to the fatty acid desaturase type 1 family. Expressed in a wide array of tissues, highest expression is found in liver followed by brain, lung, heart, and retina. A lower level is found in breast tumor when compared with normal tissues; lowest levels were found in patients with poor prognostic index.

It localises to the endoplasmic reticulum membrane. The enzyme catalyses (9Z,12Z)-octadecadienoyl-CoA + 2 Fe(II)-[cytochrome b5] + O2 + 2 H(+) = (6Z,9Z,12Z)-octadecatrienoyl-CoA + 2 Fe(III)-[cytochrome b5] + 2 H2O. It catalyses the reaction (9Z,12Z,15Z)-octadecatrienoyl-CoA + 2 Fe(II)-[cytochrome b5] + O2 + 2 H(+) = (6Z,9Z,12Z,15Z)-octadecatetraenoyl-CoA + 2 Fe(III)-[cytochrome b5] + 2 H2O. The catalysed reaction is hexadecanoyl-CoA + 2 Fe(II)-[cytochrome b5] + O2 + 2 H(+) = (6Z)-hexadecenoyl-CoA + 2 Fe(III)-[cytochrome b5] + 2 H2O. It carries out the reaction (9Z,12Z,15Z,18Z,21Z)-tetracosapentaenoyl-CoA + 2 Fe(II)-[cytochrome b5] + O2 + 2 H(+) = (6Z,9Z,12Z,15Z,18Z,21Z)-tetracosahexaenoyl-CoA + 2 Fe(III)-[cytochrome b5] + 2 H2O. The enzyme catalyses (11E)-octadecenoyl-CoA + 2 Fe(II)-[cytochrome b5] + O2 + 2 H(+) = (6Z,11E)-octadecadienoyl-CoA + 2 Fe(III)-[cytochrome b5] + 2 H2O. It catalyses the reaction (11Z,14Z)-eicosadienoyl-CoA + 2 Fe(II)-[cytochrome b5] + O2 + 2 H(+) = (8Z,11Z,14Z)-eicosatrienoyl-CoA + 2 Fe(III)-[cytochrome b5] + 2 H2O. The catalysed reaction is (11Z,14Z,17Z)-eicosatrienoyl-CoA + 2 Fe(II)-[cytochrome b5] + O2 + 2 H(+) = (8Z,11Z,14Z,17Z)-eicosatetraenoyl-CoA + 2 Fe(III)-[cytochrome b5] + 2 H2O. It functions in the pathway lipid metabolism; polyunsaturated fatty acid biosynthesis. Its function is as follows. Involved in the biosynthesis of highly unsaturated fatty acids (HUFA) from the essential polyunsaturated fatty acids (PUFA) linoleic acid (LA) (18:2n-6) and alpha-linolenic acid (ALA) (18:3n-3) precursors, acting as a fatty acyl-coenzyme A (CoA) desaturase that introduces a cis double bond at carbon 6 of the fatty acyl chain. Catalyzes the first and rate limiting step in this pathway which is the desaturation of LA (18:2n-6) and ALA (18:3n-3) into gamma-linoleate (GLA) (18:3n-6) and stearidonate (18:4n-3), respectively. Subsequently, in the biosynthetic pathway of HUFA n-3 series, it desaturates tetracosapentaenoate (24:5n-3) to tetracosahexaenoate (24:6n-3), which is then converted to docosahexaenoate (DHA)(22:6n-3), an important lipid for nervous system function. Desaturates hexadecanate (palmitate) to produce 6Z-hexadecenoate (sapienate), a fatty acid unique to humans and major component of human sebum, that has been implicated in the development of acne and may have potent antibacterial activity. It can also desaturate (11E)-octadecenoate (trans-vaccenoate, the predominant trans fatty acid in human milk) at carbon 6 generating (6Z,11E)-octadecadienoate. In addition to Delta-6 activity, this enzyme exhibits Delta-8 activity with slight biases toward n-3 fatty acyl-CoA substrates. This Homo sapiens (Human) protein is Acyl-CoA 6-desaturase.